A 465-amino-acid polypeptide reads, in one-letter code: Ribosomal oxygenase 2 (465 aa).

The JmjC domain maps to 139 to 271 (QPQRYKDELW…NSWGDCLLDS (133 aa)). The Fe cation site is built by H179, D181, and H240. Residue S309 is modified to Phosphoserine.

It belongs to the ROX family. MINA53 subfamily. It depends on Fe(2+) as a cofactor. As to expression, predominantly expressed in testis. Expressed at high levels in spleen, thymus, and colon, but barely detectable in brain, skeletal muscle, and seminal vesicle (at protein level).

Its subcellular location is the nucleus. It localises to the nucleolus. It catalyses the reaction L-histidyl-[ribosomal protein uL15] + 2-oxoglutarate + O2 = (3S)-3-hydroxy-L-histidyl-[ribosomal protein uL15] + succinate + CO2. It carries out the reaction L-histidyl-[protein] + 2-oxoglutarate + O2 = (3S)-3-hydroxy-L-histidyl-[protein] + succinate + CO2. In terms of biological role, oxygenase that can act as both a histone lysine demethylase and a ribosomal histidine hydroxylase. Is involved in the demethylation of trimethylated 'Lys-9' on histone H3 (H3K9me3), leading to an increase in ribosomal RNA expression. Also catalyzes the hydroxylation of 60S ribosomal protein L27a on 'His-39'. May play an important role in cell growth and survival. May be involved in ribosome biogenesis, most likely during the assembly process of pre-ribosomal particles. The polypeptide is Ribosomal oxygenase 2 (Mus musculus (Mouse)).